The following is a 155-amino-acid chain: Ribosomal RNA large subunit methyltransferase H (155 aa).

The S-adenosyl-L-methionine site is built by L72 and G104.

This sequence belongs to the RNA methyltransferase RlmH family. In terms of assembly, homodimer.

The protein resides in the cytoplasm. It carries out the reaction pseudouridine(1915) in 23S rRNA + S-adenosyl-L-methionine = N(3)-methylpseudouridine(1915) in 23S rRNA + S-adenosyl-L-homocysteine + H(+). In terms of biological role, specifically methylates the pseudouridine at position 1915 (m3Psi1915) in 23S rRNA. This Fusobacterium nucleatum subsp. nucleatum (strain ATCC 25586 / DSM 15643 / BCRC 10681 / CIP 101130 / JCM 8532 / KCTC 2640 / LMG 13131 / VPI 4355) protein is Ribosomal RNA large subunit methyltransferase H.